A 31-amino-acid polypeptide reads, in one-letter code: Cytochrome b6-f complex subunit 6 (31 aa).

A helical membrane pass occupies residues 4 to 26 (ITSYFGFLLAASTITPALFIGLS).

This sequence belongs to the PetL family. The 4 large subunits of the cytochrome b6-f complex are cytochrome b6, subunit IV (17 kDa polypeptide, PetD), cytochrome f and the Rieske protein, while the 4 small subunits are PetG, PetL, PetM and PetN. The complex functions as a dimer.

The protein localises to the plastid. Its subcellular location is the chloroplast thylakoid membrane. In terms of biological role, component of the cytochrome b6-f complex, which mediates electron transfer between photosystem II (PSII) and photosystem I (PSI), cyclic electron flow around PSI, and state transitions. PetL is important for photoautotrophic growth as well as for electron transfer efficiency and stability of the cytochrome b6-f complex. In Buxus microphylla (Littleleaf boxwood), this protein is Cytochrome b6-f complex subunit 6.